The sequence spans 139 residues: uncharacterized protein (139 aa).

This is an uncharacterized protein from Caenorhabditis elegans.